The primary structure comprises 311 residues: Endosome-associated-trafficking regulator 1 (311 aa).

Positions R167 to G278 form a coiled coil.

The protein belongs to the ENTR1 family.

The protein resides in the cytoplasm. It is found in the early endosome. The protein localises to the endosome. It localises to the recycling endosome. Its subcellular location is the midbody. The protein resides in the cytoskeleton. It is found in the microtubule organizing center. The protein localises to the centrosome. It localises to the cilium basal body. Its function is as follows. Endosome-associated protein that plays a role in membrane receptor sorting, cytokinesis and ciliogenesis. This chain is Endosome-associated-trafficking regulator 1, found in Danio rerio (Zebrafish).